We begin with the raw amino-acid sequence, 811 residues long: Bifunctional enzyme MurC/Ddl (811 aa).

The UDP-N-acetylmuramate--alanine ligase stretch occupies residues 1 to 450 (MNRKNHYHFI…GNALKDFEPK (450 aa)). Residues 111–117 (GSHGKTT) and 607–662 (LETF…SREI) each bind ATP. Residues 451-811 (KLSVGVVCGG…NKQCLLTAKS (361 aa)) are D-alanine--D-alanine ligase. The 212-residue stretch at 574–785 (KRLAASVGVP…FEQIVHQLII (212 aa)) folds into the ATP-grasp domain. Mg(2+) contacts are provided by aspartate 739, glutamate 752, and asparagine 754.

In the N-terminal section; belongs to the MurCDEF family. The protein in the C-terminal section; belongs to the D-alanine--D-alanine ligase family. Requires Mg(2+) as cofactor. The cofactor is Mn(2+).

It localises to the cytoplasm. The catalysed reaction is UDP-N-acetyl-alpha-D-muramate + L-alanine + ATP = UDP-N-acetyl-alpha-D-muramoyl-L-alanine + ADP + phosphate + H(+). The enzyme catalyses 2 D-alanine + ATP = D-alanyl-D-alanine + ADP + phosphate + H(+). The protein operates within cell wall biogenesis; peptidoglycan biosynthesis. The sequence is that of Bifunctional enzyme MurC/Ddl (murC/ddlA) from Chlamydia caviae (strain ATCC VR-813 / DSM 19441 / 03DC25 / GPIC) (Chlamydophila caviae).